Reading from the N-terminus, the 218-residue chain is Phosphoribosylformylglycinamidine synthase subunit PurQ (218 aa).

Residues 2–218 enclose the Glutamine amidotransferase type-1 domain; it reads RVGVIRFPGS…FFRGILKFRG (217 aa). Catalysis depends on C85, which acts as the Nucleophile. Residues H192 and E194 contribute to the active site.

In terms of assembly, part of the FGAM synthase complex composed of 1 PurL, 1 PurQ and 2 PurS subunits.

The protein localises to the cytoplasm. It catalyses the reaction N(2)-formyl-N(1)-(5-phospho-beta-D-ribosyl)glycinamide + L-glutamine + ATP + H2O = 2-formamido-N(1)-(5-O-phospho-beta-D-ribosyl)acetamidine + L-glutamate + ADP + phosphate + H(+). The catalysed reaction is L-glutamine + H2O = L-glutamate + NH4(+). It functions in the pathway purine metabolism; IMP biosynthesis via de novo pathway; 5-amino-1-(5-phospho-D-ribosyl)imidazole from N(2)-formyl-N(1)-(5-phospho-D-ribosyl)glycinamide: step 1/2. Its function is as follows. Part of the phosphoribosylformylglycinamidine synthase complex involved in the purines biosynthetic pathway. Catalyzes the ATP-dependent conversion of formylglycinamide ribonucleotide (FGAR) and glutamine to yield formylglycinamidine ribonucleotide (FGAM) and glutamate. The FGAM synthase complex is composed of three subunits. PurQ produces an ammonia molecule by converting glutamine to glutamate. PurL transfers the ammonia molecule to FGAR to form FGAM in an ATP-dependent manner. PurS interacts with PurQ and PurL and is thought to assist in the transfer of the ammonia molecule from PurQ to PurL. This chain is Phosphoribosylformylglycinamidine synthase subunit PurQ, found in Methanothermobacter thermautotrophicus (strain ATCC 29096 / DSM 1053 / JCM 10044 / NBRC 100330 / Delta H) (Methanobacterium thermoautotrophicum).